The following is a 142-amino-acid chain: Large ribosomal subunit protein uL13 (142 aa).

It belongs to the universal ribosomal protein uL13 family. Part of the 50S ribosomal subunit.

In terms of biological role, this protein is one of the early assembly proteins of the 50S ribosomal subunit, although it is not seen to bind rRNA by itself. It is important during the early stages of 50S assembly. This chain is Large ribosomal subunit protein uL13, found in Pseudomonas putida (strain ATCC 700007 / DSM 6899 / JCM 31910 / BCRC 17059 / LMG 24140 / F1).